We begin with the raw amino-acid sequence, 755 residues long: 1,4-alpha-glucan branching enzyme GlgB (755 aa).

Catalysis depends on Asp431, which acts as the Nucleophile. Glu484 serves as the catalytic Proton donor.

Belongs to the glycosyl hydrolase 13 family. GlgB subfamily. Monomer.

The enzyme catalyses Transfers a segment of a (1-&gt;4)-alpha-D-glucan chain to a primary hydroxy group in a similar glucan chain.. The protein operates within glycan biosynthesis; glycogen biosynthesis. Functionally, catalyzes the formation of the alpha-1,6-glucosidic linkages in glycogen by scission of a 1,4-alpha-linked oligosaccharide from growing alpha-1,4-glucan chains and the subsequent attachment of the oligosaccharide to the alpha-1,6 position. This chain is 1,4-alpha-glucan branching enzyme GlgB, found in Prochlorococcus marinus (strain NATL1A).